Reading from the N-terminus, the 294-residue chain is Golgi to ER traffic protein 2 (294 aa).

The segment at Met1–Asp104 is disordered. The Cytoplasmic segment spans residues Met1–Asn166. Positions Lys12–Lys21 are enriched in basic residues. Positions Ile34 to Asp65 are enriched in polar residues. Basic and acidic residues predominate over residues Lys85 to Gln95. The helical transmembrane segment at Leu167–Leu187 threads the bilayer. The Lumenal portion of the chain corresponds to Thr188–Asn205. A helical membrane pass occupies residues Phe206 to Leu225. The Cytoplasmic segment spans residues Gln226–Asp272. A helical membrane pass occupies residues Val273–Leu293. Position 294 (Ile294) is a topological domain, lumenal.

Belongs to the GET2 family. In terms of assembly, component of the Golgi to ER traffic (GET) complex, which is composed of GET1, GET2 and GET3. Within the complex, GET1 and GET2 form a heterotetramer which is stabilized by phosphatidylinositol binding and which binds to the GET3 homodimer.

Its subcellular location is the endoplasmic reticulum membrane. It localises to the golgi apparatus membrane. Its function is as follows. Required for the post-translational delivery of tail-anchored (TA) proteins to the endoplasmic reticulum. Together with GET1, acts as a membrane receptor for soluble GET3, which recognizes and selectively binds the transmembrane domain of TA proteins in the cytosol. The GET complex cooperates with the HDEL receptor ERD2 to mediate the ATP-dependent retrieval of resident ER proteins that contain a C-terminal H-D-E-L retention signal from the Golgi to the ER. The protein is Golgi to ER traffic protein 2 of Vanderwaltozyma polyspora (strain ATCC 22028 / DSM 70294 / BCRC 21397 / CBS 2163 / NBRC 10782 / NRRL Y-8283 / UCD 57-17) (Kluyveromyces polysporus).